Reading from the N-terminus, the 103-residue chain is Large ribosomal subunit protein bL21 (103 aa).

This sequence belongs to the bacterial ribosomal protein bL21 family. Part of the 50S ribosomal subunit. Contacts protein L20.

In terms of biological role, this protein binds to 23S rRNA in the presence of protein L20. The chain is Large ribosomal subunit protein bL21 from Borreliella afzelii (strain PKo) (Borrelia afzelii).